The sequence spans 128 residues: Secreted RxLR effector protein 57 (128 aa).

The N-terminal stretch at 1–31 (MHRKRLRVVLSATLLDLITCVQLMLDPLVRS) is a signal peptide. The RxLR signature appears at 58-61 (RILR).

The protein belongs to the RxLR effector family.

The protein localises to the secreted. Its subcellular location is the host nucleus. It is found in the host cytoplasm. In terms of biological role, secreted effector that completely suppresses the host cell death induced by cell death-inducing proteins. This is Secreted RxLR effector protein 57 from Plasmopara viticola (Downy mildew of grapevine).